Reading from the N-terminus, the 103-residue chain is 6-pyruvoyl tetrahydrobiopterin synthase (103 aa).

At A1 the chain carries N-acetylalanine. H27 serves as a coordination point for Zn(2+). Residues H53 and E92 each act as charge relay system in the active site.

This sequence belongs to the PTPS family. In terms of assembly, homohexamer formed of two homotrimers in a head to head fashion. Requires Zn(2+) as cofactor.

The catalysed reaction is 7,8-dihydroneopterin 3'-triphosphate = 6-pyruvoyl-5,6,7,8-tetrahydropterin + triphosphate + H(+). The protein operates within cofactor biosynthesis; tetrahydrobiopterin biosynthesis; tetrahydrobiopterin from 7,8-dihydroneopterin triphosphate: step 1/3. In terms of biological role, involved in the biosynthesis of tetrahydrobiopterin, an essential cofactor of aromatic amino acid hydroxylases. Catalyzes the transformation of 7,8-dihydroneopterin triphosphate into 6-pyruvoyl tetrahydropterin. The polypeptide is 6-pyruvoyl tetrahydrobiopterin synthase (pts) (Salmo salar (Atlantic salmon)).